We begin with the raw amino-acid sequence, 919 residues long: DNA-directed RNA polymerase 132 kDa polypeptide (919 aa).

The protein belongs to the RNA polymerase beta chain family. In terms of assembly, the DNA-dependent RNA polymerase used for intermediate and late genes expression consists of eight subunits (147) kDa, (133) kDa, (35) kDa, (30) kDa, (22) kDa, (19) kDa, (18) kDa and (7) kDa totalling more than 500 kDa in mass. The same holoenzyme, with the addition of the transcription-specificity factor RAP94, is used for early gene expression.

The protein resides in the virion. It catalyses the reaction RNA(n) + a ribonucleoside 5'-triphosphate = RNA(n+1) + diphosphate. In terms of biological role, part of the DNA-dependent RNA polymerase which catalyzes the transcription of viral DNA into RNA using the four ribonucleoside triphosphates as substrates. Responsible for the transcription of early, intermediate and late genes. DNA-dependent RNA polymerase associates with the early transcription factor (ETF), itself composed of D6 and A7, thereby allowing the early genes transcription. Late transcription, and probably also intermediate transcription, require newly synthesized RNA polymerase. The protein is DNA-directed RNA polymerase 132 kDa polypeptide (RPO132) of Sheeppox virus (strain KS-1) (SPPV).